A 397-amino-acid chain; its full sequence is Lipoyl synthase 2, chloroplastic (397 aa).

The transit peptide at methionine 1–arginine 35 directs the protein to the chloroplast. A disordered region spans residues alanine 49 to lysine 85. Positions asparagine 54–serine 67 are enriched in low complexity. Positions 128, 133, 139, 159, 163, 166, and 374 each coordinate [4Fe-4S] cluster. The 222-residue stretch at glycine 142 to arginine 363 folds into the Radical SAM core domain.

The protein belongs to the radical SAM superfamily. Lipoyl synthase family. It depends on [4Fe-4S] cluster as a cofactor.

Its subcellular location is the plastid. The protein localises to the chloroplast. It carries out the reaction [[Fe-S] cluster scaffold protein carrying a second [4Fe-4S](2+) cluster] + N(6)-octanoyl-L-lysyl-[protein] + 2 oxidized [2Fe-2S]-[ferredoxin] + 2 S-adenosyl-L-methionine + 4 H(+) = [[Fe-S] cluster scaffold protein] + N(6)-[(R)-dihydrolipoyl]-L-lysyl-[protein] + 4 Fe(3+) + 2 hydrogen sulfide + 2 5'-deoxyadenosine + 2 L-methionine + 2 reduced [2Fe-2S]-[ferredoxin]. It participates in protein modification; protein lipoylation via endogenous pathway; protein N(6)-(lipoyl)lysine from octanoyl-[acyl-carrier-protein]: step 2/2. Catalyzes the radical-mediated insertion of two sulfur atoms into the C-6 and C-8 positions of the octanoyl moiety bound to the lipoyl domains of lipoate-dependent enzymes, thereby converting the octanoylated domains into lipoylated derivatives. The polypeptide is Lipoyl synthase 2, chloroplastic (Populus trichocarpa (Western balsam poplar)).